Reading from the N-terminus, the 384-residue chain is Guanine nucleotide-binding protein alpha-2 subunit (384 aa).

The segment at 1–23 is disordered; it reads MGLVCSRNRRYRDSDPEENAQAA. Glycine 2 carries N-myristoyl glycine lipidation. Cysteine 5 carries S-palmitoyl cysteine lipidation. One can recognise a G-alpha domain in the interval 38-384; the sequence is HIQKLLLLGA…RRNLFEAGLL (347 aa). Residues 41–54 form a G1 motif region; it reads KLLLLGAGESGKST. Positions 49, 50, 51, 52, 53, 54, 163, 188, 189, 194, 222, 288, 289, 291, and 356 each coordinate GTP. Serine 53 provides a ligand contact to Mg(2+). A G2 motif region spans residues 186–194; the sequence is DVLYARVRT. Residue threonine 194 participates in Mg(2+) binding. The interval 215-224 is G3 motif; it reads YRLFDVGGQR. A G4 motif region spans residues 284 to 291; the sequence is MLFLNKFD. The tract at residues 354-359 is G5 motif; the sequence is TTALDQ.

It belongs to the G-alpha family. In terms of assembly, g proteins are composed of 3 units; alpha, beta and gamma. The alpha chain contains the guanine nucleotide binding site. Mg(2+) is required as a cofactor.

Its function is as follows. Guanine nucleotide-binding proteins (G proteins) are involved as modulators or transducers in various transmembrane signaling systems. The protein is Guanine nucleotide-binding protein alpha-2 subunit (GPA2) of Pisum sativum (Garden pea).